The following is a 118-amino-acid chain: UPF0295 protein GWCH70_0499 (118 aa).

Helical transmembrane passes span 12-32 and 42-62; these read IRTF…IGIF and LFMI…FWIG.

This sequence belongs to the UPF0295 family.

It localises to the cell membrane. In Geobacillus sp. (strain WCH70), this protein is UPF0295 protein GWCH70_0499.